The chain runs to 160 residues: SsrA-binding protein (160 aa).

Belongs to the SmpB family.

Its subcellular location is the cytoplasm. Functionally, required for rescue of stalled ribosomes mediated by trans-translation. Binds to transfer-messenger RNA (tmRNA), required for stable association of tmRNA with ribosomes. tmRNA and SmpB together mimic tRNA shape, replacing the anticodon stem-loop with SmpB. tmRNA is encoded by the ssrA gene; the 2 termini fold to resemble tRNA(Ala) and it encodes a 'tag peptide', a short internal open reading frame. During trans-translation Ala-aminoacylated tmRNA acts like a tRNA, entering the A-site of stalled ribosomes, displacing the stalled mRNA. The ribosome then switches to translate the ORF on the tmRNA; the nascent peptide is terminated with the 'tag peptide' encoded by the tmRNA and targeted for degradation. The ribosome is freed to recommence translation, which seems to be the essential function of trans-translation. The protein is SsrA-binding protein of Cronobacter sakazakii (strain ATCC BAA-894) (Enterobacter sakazakii).